The following is a 1560-amino-acid chain: Lysine-specific demethylase 5C (1560 aa).

The JmjN domain maps to 14–55; it reads CPVFEPSWAEFRDPLGYIAKIRPIAEKSGICKIRPPADWQPP. In terms of domain architecture, ARID spans 79 to 169; the sequence is TRVKLNYLDQ…IVYPYEMYQS (91 aa). Polar residues predominate over residues 197 to 207; that stretch reads LRQSVQPSKFN. The segment at 197 to 227 is disordered; sequence LRQSVQPSKFNSYGRRAKRLQPDPEPTEEDI. Residues lysine 205, lysine 229, lysine 244, and lysine 274 each participate in a glycyl lysine isopeptide (Lys-Gly) (interchain with G-Cter in SUMO2) cross-link. The residue at position 287 (serine 287) is a Phosphoserine. Residue lysine 295 forms a Glycyl lysine isopeptide (Lys-Gly) (interchain with G-Cter in SUMO2) linkage. Residues serine 301 and serine 317 each carry the phosphoserine modification. The PHD-type 1 zinc-finger motif lies at 326 to 372; sequence VCRMCSRGDEDDKLLLCDGCDDNYHIFCLLPPLPEIPKGVWRCPKCV. Residue tyrosine 440 participates in 2-oxoglutarate binding. The 167-residue stretch at 468–634 folds into the JmjC domain; the sequence is EYATSGWNLN…AGRQCIEHYR (167 aa). Fe cation is bound by residues histidine 514 and glutamate 516. 2-oxoglutarate contacts are provided by serine 522, asparagine 524, and lysine 532. Histidine 602 is a binding site for Fe cation. Residues 707–759 form a C5HC2 zinc finger; the sequence is CIKCKTTCFLSALACYDCPDGLVCLSHINDLCKCSSSRQYLRYRYTLDELPAM. A phosphoserine mark is found at serine 893 and serine 897. A Glycyl lysine isopeptide (Lys-Gly) (interchain with G-Cter in SUMO2) cross-link involves residue lysine 1127. The interval 1161–1181 is disordered; that stretch reads ILQLRRTNSAKPSPLASSSTA. Residues 1169–1181 show a composition bias toward low complexity; sequence SAKPSPLASSSTA. The segment at 1187–1248 adopts a PHD-type 2 zinc-finger fold; that stretch reads ICVCGQVLAG…DTKFLCPLCM (62 aa). Disordered regions lie at residues 1316-1371 and 1444-1560; these read QAEP…GSGK and ERHG…QQQL. The span at 1335 to 1345 shows a compositional bias: basic and acidic residues; sequence PLREGSGKDMP. Serine 1359 carries the phosphoserine modification. Residues 1448 to 1463 are compositionally biased toward basic residues; it reads SRARGRALERRRRRKV. Residues 1464 to 1481 are compositionally biased toward basic and acidic residues; it reads DRGGEGDDPAREELEPKR. Over residues 1488–1503 the composition is skewed to acidic residues; sequence EAEEVQEEEELEEETG. Positions 1516 to 1544 are enriched in polar residues; the sequence is SPSTQENQNGLEPAEGTTSGPSAPFSTLT.

It belongs to the JARID1 histone demethylase family. Part of two distinct complexes, one containing E2F6, and the other containing REST. Interacts with ZMYND8. Fe(2+) serves as cofactor. In terms of tissue distribution, expressed in all tissues examined. Highest levels found in brain and skeletal muscle.

The protein localises to the nucleus. The catalysed reaction is N(6),N(6),N(6)-trimethyl-L-lysyl(4)-[histone H3] + 3 2-oxoglutarate + 3 O2 = L-lysyl(4)-[histone H3] + 3 formaldehyde + 3 succinate + 3 CO2. Its activity is regulated as follows. The inhibitor KDOAM-25 and others inhibit its demethylase activity, resulting to cell cycle arrest in myeloma cells. In terms of biological role, histone demethylase that specifically demethylates 'Lys-4' of histone H3, thereby playing a central role in histone code. Does not demethylate histone H3 'Lys-9', H3 'Lys-27', H3 'Lys-36', H3 'Lys-79' or H4 'Lys-20'. Demethylates trimethylated and dimethylated but not monomethylated H3 'Lys-4'. Participates in transcriptional repression of neuronal genes by recruiting histone deacetylases and REST at neuron-restrictive silencer elements. Represses the CLOCK-BMAL1 heterodimer-mediated transcriptional activation of the core clock component PER2. This Homo sapiens (Human) protein is Lysine-specific demethylase 5C.